A 325-amino-acid chain; its full sequence is MAIDFKQDILAPVAQDFAAMDQFINEGISSKVALVMSVSKHVVEAGGKRMRPIMCLLAAYACGETNLKHAQKLAAIIEMLHTATLVHDDVVDESGLRRGRPTANATWNNQTAVLVGDFLIARAFDLLVDLDNMILLKDFSTGTCEIAEGEVLQLQAQHQPDTTEDIYLQIIHGKTSRLFELATEGAAILAGKPEYREPLRRFAGHFGNAFQIIDDILDYTSDADTLGKNIGDDLMEGKPTLPLIAAMQNTQGEQRDLIRRSIATGGTSQLEQVIAIVQNSGALDYCHKRATEETERALQALEILPESTYRQALVNLTRLALDRIQ.

3 residues coordinate isopentenyl diphosphate: Lys-48, Arg-51, and His-81. Mg(2+)-binding residues include Asp-88 and Asp-92. Arg-97 is a binding site for an all-trans-polyprenyl diphosphate. Residue Arg-98 participates in isopentenyl diphosphate binding. Positions 174, 175, 211, and 228 each coordinate an all-trans-polyprenyl diphosphate.

This sequence belongs to the FPP/GGPP synthase family. Homodimer. Requires Mg(2+) as cofactor.

It carries out the reaction 7 isopentenyl diphosphate + (2E)-geranyl diphosphate = all-trans-nonaprenyl diphosphate + 7 diphosphate. Its function is as follows. catalyzes the sequential condensation of isopentenyl diphosphate (IPP) with the allylic substrate to give solanesyl diphosphate. Could be important to determine the side chain length of ubiquinone. This Rhodobacter capsulatus (Rhodopseudomonas capsulata) protein is All-trans-nonaprenyl-diphosphate synthase (geranyl-diphosphate specific) (sdsA).